The following is a 374-amino-acid chain: Tomoregulin-2 (374 aa).

Positions 1–40 are cleaved as a signal peptide; sequence MVLWESPRQCSSWTLCEGFCWLLLLPVTLLIIARPVKLAA. Over 41 to 320 the chain is Extracellular; that stretch reads FPTSLSDCQT…VPGPVRFQYV (280 aa). N-linked (GlcNAc...) asparagine glycosylation is present at Asn55. 2 Kazal-like domains span residues 90 to 137 and 181 to 229; these read VCQF…SCAT and VCNI…RCQD. 6 disulfides stabilise this stretch: Cys91–Cys121, Cys95–Cys114, Cys103–Cys135, Cys182–Cys213, Cys186–Cys206, and Cys195–Cys227. An N-linked (GlcNAc...) asparagine glycan is attached at Asn230. An EGF-like domain is found at 261-301; sequence HHIPCPEHYNGFCMHGKCEHSINMQEPSCRCDAGYTGQHCE. 3 cysteine pairs are disulfide-bonded: Cys265–Cys278, Cys273–Cys289, and Cys291–Cys300. Positions 303-320 are required for shedding; that stretch reads KDYSVLYVVPGPVRFQYV. A helical membrane pass occupies residues 321–341; the sequence is LIAAVIGTIQIAVICVVVLCI. Topologically, residues 342-374 are cytoplasmic; that stretch reads TRKCPRSNRIHRQKQNTGHYSSDNTTRASTRLI. Residues 353-374 are disordered; that stretch reads RQKQNTGHYSSDNTTRASTRLI. Residues 356 to 374 are compositionally biased toward polar residues; sequence QNTGHYSSDNTTRASTRLI.

The protein belongs to the tomoregulin family. Post-translationally, O-glycosylated; contains chondroitin sulfate glycosaminoglycans. In terms of processing, a soluble form (TMEFF2-ECD) is produced by proteolytic shedding. This shedding can be induced by phorbol ester or pro-inflammatory cytokines such as TNFalpha, and is mediated by a metalloproteinase ADAM. Widely expressed in the brain. In the olfactory bulb expressed in mitral cell, granule, and glomerular layers. In the hippocampus expressed in hippocampal cornu ammonis, pyramidal layer, dentate gyrus, and substantia nigra pars compacta.

The protein localises to the membrane. Its function is as follows. May be a survival factor for hippocampal and mesencephalic neurons. The shedded form may up-regulate cell proliferation. This is Tomoregulin-2 (Tmeff2) from Mus musculus (Mouse).